Here is a 328-residue protein sequence, read N- to C-terminus: MELEVRHLRALCAIADAGSLHRAARRLGVAQPTLSTQLTRIEQALGGPLFTRERTGCRPTPLGRTVLGRARPLLTDMNTLVREARAAAAGGDSRLRVGSTASRALAGWLRRLRRPGLEPTLQMDVSANALLRRVTDGQLDVAFVHEVEGCALHIPEDLRLRVLVEREPQFVMLPADHPAAARPVVRLADLADDRWMVDPTVDGEWDGVHRMLRAVGLNPRVLHGDYHTAASLVATGEVVTVCQPSSQSRPDTAVRRLYGDPLGVRLLLAARTRAELDAVFPALEDAYWEAARQSTAYREWLEGGGIRTLPRCPVAATGGGRVEFVRAR.

An HTH lysR-type domain is found at 1–60; the sequence is MELEVRHLRALCAIADAGSLHRAARRLGVAQPTLSTQLTRIEQALGGPLFTRERTGCRPT. Residues 20–39 constitute a DNA-binding region (H-T-H motif); sequence LHRAARRLGVAQPTLSTQLT.

Belongs to the LysR transcriptional regulatory family.

Transcriptional trans-activator of the gene (mprA) for the small neutral protease. The sequence is that of Small neutral protease regulatory protein (mprR) from Streptomyces coelicolor (strain ATCC BAA-471 / A3(2) / M145).